A 253-amino-acid polypeptide reads, in one-letter code: Leucyl/phenylalanyl-tRNA--protein transferase (253 aa).

The protein belongs to the L/F-transferase family.

The protein resides in the cytoplasm. It carries out the reaction N-terminal L-lysyl-[protein] + L-leucyl-tRNA(Leu) = N-terminal L-leucyl-L-lysyl-[protein] + tRNA(Leu) + H(+). The catalysed reaction is N-terminal L-arginyl-[protein] + L-leucyl-tRNA(Leu) = N-terminal L-leucyl-L-arginyl-[protein] + tRNA(Leu) + H(+). It catalyses the reaction L-phenylalanyl-tRNA(Phe) + an N-terminal L-alpha-aminoacyl-[protein] = an N-terminal L-phenylalanyl-L-alpha-aminoacyl-[protein] + tRNA(Phe). Its function is as follows. Functions in the N-end rule pathway of protein degradation where it conjugates Leu, Phe and, less efficiently, Met from aminoacyl-tRNAs to the N-termini of proteins containing an N-terminal arginine or lysine. The chain is Leucyl/phenylalanyl-tRNA--protein transferase from Bordetella petrii (strain ATCC BAA-461 / DSM 12804 / CCUG 43448).